The following is a 1221-amino-acid chain: Deubiquitinating protein VCPIP1 (1221 aa).

Residues 1-19 show a composition bias toward pro residues; that stretch reads MSQPPPPPPLPPPPPPPEA. The disordered stretch occupies residues 1–40; sequence MSQPPPPPPLPPPPPPPEAPQTSSSLAAAATPGGLSKRRD. The OTU domain maps to 207–360; that stretch reads LIPVHVDGDG…RNHYIPLVGI (154 aa). Residue D215 is part of the active site. The Nucleophile role is filled by C218. H353 is a catalytic residue. Residue K407 is modified to N6-acetyllysine. 2 disordered regions span residues 724-778 and 988-1009; these read SVMQ…KIRI and EATT…GSGG. S746 and S756 each carry phosphoserine. Low complexity predominate over residues 754 to 770; that stretch reads PSSAPATPTKAPYSPTT. T762 is subject to Phosphothreonine. Residues S767, S993, S997, and S1076 each carry the phosphoserine modification. 2 disordered regions span residues 1117–1177 and 1189–1221; these read ASMD…TDSR and RSKA…MDHS. Over residues 1143–1156 the composition is skewed to polar residues; it reads VSSSVRPGNLQTGL. The span at 1162-1173 shows a compositional bias: low complexity; it reads LTGGTENLNTET. A phosphoserine mark is found at S1197 and S1206. The segment covering 1198 to 1208 has biased composition (acidic residues); sequence MEEPEEMDSQD. Polar residues predominate over residues 1209 to 1221; it reads AETTNTTEPMDHS.

As to quaternary structure, binds VCP and the ternary complex containing STX5A, NSFL1C and VCP. In terms of processing, phosphorylated at Ser-1206 by ATM or ATR following induction of covalent DNA-protein cross-links (DPCs). Widely expressed.

It localises to the nucleus. The protein resides in the cytoplasm. Its subcellular location is the endoplasmic reticulum. The protein localises to the golgi apparatus. It is found in the golgi stack. The catalysed reaction is Thiol-dependent hydrolysis of ester, thioester, amide, peptide and isopeptide bonds formed by the C-terminal Gly of ubiquitin (a 76-residue protein attached to proteins as an intracellular targeting signal).. Deubiquitinating enzyme involved in DNA repair and reassembly of the Golgi apparatus and the endoplasmic reticulum following mitosis. Necessary for VCP-mediated reassembly of Golgi stacks after mitosis. Plays a role in VCP-mediated formation of transitional endoplasmic reticulum (tER). Mediates dissociation of the ternary complex containing STX5A, NSFL1C and VCP. Also involved in DNA repair following phosphorylation by ATM or ATR: acts by catalyzing deubiquitination of SPRTN, thereby promoting SPRTN recruitment to chromatin and subsequent proteolytic cleavage of covalent DNA-protein cross-links (DPCs). Hydrolyzes 'Lys-11'- and 'Lys-48'-linked polyubiquitin chains. The sequence is that of Deubiquitinating protein VCPIP1 from Rattus norvegicus (Rat).